We begin with the raw amino-acid sequence, 92 residues long: uncharacterized protein (92 aa).

This is an uncharacterized protein from Treponema pallidum (strain Nichols).